The primary structure comprises 446 residues: ATP-dependent RNA helicase SUB2 (446 aa).

Ser-2 bears the N-acetylserine mark. 2 positions are modified to phosphoserine: Ser-13 and Ser-37. Residues 23–41 (ASKAAEAGETGAATSATEG) are compositionally biased toward low complexity. Residues 23–52 (ASKAAEAGETGAATSATEGDNNNNTAAGDK) form a disordered region. The short motif at 62–90 (TGFKDFLLKPELSRAIIDCGFEHPSEVQQ) is the Q motif element. Positions 93 to 268 (IPQSIHGTDV…RRFLQNPLEI (176 aa)) constitute a Helicase ATP-binding domain. ATP is bound at residue 106–113 (AKSGLGKT). Thr-169 carries the post-translational modification Phosphothreonine. Residues 215 to 218 (DECD) carry the DECD box motif. One can recognise a Helicase C-terminal domain in the interval 280 to 441 (GLQQYYIKLE…EFPEEGIDPS (162 aa)).

This sequence belongs to the DEAD box helicase family. DECD subfamily. Component of the TREX complex composed of at least SUB2, TEX1, YRA1 and the four THO complex components: HPR1, MFT1, THO2 and THP1. Interacts with HPR1, YRA1, and YRA2. SUB2 may mediate the interaction between the THO complex and YRA1. Associates with growing mRNP complexes during transcription. This association requires the presence of HPR1. Also interacts with SAC3. Interacts with THO1 in the presence of RNA; this interaction facilitates RNA binding of SUB2.

The protein localises to the nucleus. The enzyme catalyses ATP + H2O = ADP + phosphate + H(+). Functionally, ATP-binding RNA helicase component of the TREX complex involved in transcription elongation and required for the export of mRNA out of the nucleus. SUB2 also plays a role in pre-mRNA splicing and spliceosome assembly. May be involved in rDNA and telomeric silencing, and maintenance of genome integrity. Associates with THO1, which facilitates RNA binding of SUB2 and likely plays a role in mRNA export. The sequence is that of ATP-dependent RNA helicase SUB2 (SUB2) from Saccharomyces cerevisiae (strain ATCC 204508 / S288c) (Baker's yeast).